A 74-amino-acid chain; its full sequence is Tetrahydromethanopterin S-methyltransferase subunit G (74 aa).

A helical membrane pass occupies residues 50–70 (IGILYGLVIGLYLCMLYILLG).

This sequence belongs to the MtrG family. As to quaternary structure, the complex is composed of 8 subunits; MtrA, MtrB, MtrC, MtrD, MtrE, MtrF, MtrG and MtrH.

Its subcellular location is the cell membrane. It carries out the reaction 5-methyl-5,6,7,8-tetrahydromethanopterin + coenzyme M + 2 Na(+)(in) = 5,6,7,8-tetrahydromethanopterin + methyl-coenzyme M + 2 Na(+)(out). Its pathway is one-carbon metabolism; methanogenesis from CO(2); methyl-coenzyme M from 5,10-methylene-5,6,7,8-tetrahydromethanopterin: step 2/2. Part of a complex that catalyzes the formation of methyl-coenzyme M and tetrahydromethanopterin from coenzyme M and methyl-tetrahydromethanopterin. This is an energy-conserving, sodium-ion translocating step. This is Tetrahydromethanopterin S-methyltransferase subunit G from Methanopyrus kandleri (strain AV19 / DSM 6324 / JCM 9639 / NBRC 100938).